The following is a 138-amino-acid chain: Lymphocyte antigen 6L (138 aa).

The signal sequence occupies residues 1-16 (MERLVLTLCTLPLAVA). Residue asparagine 27 is glycosylated (N-linked (GlcNAc...) asparagine). One can recognise a UPAR/Ly6 domain in the interval 28-122 (LSCYQCFKVS…TPQEGRWALR (95 aa)). Disulfide bonds link cysteine 30-cysteine 47 and cysteine 103-cysteine 108. Glycine 117 carries GPI-anchor amidated glycine lipidation. Positions 118 to 138 (RWALRGGLLLQVGLSLLRALL) are cleaved as a propeptide — removed in mature form.

The protein localises to the cell membrane. The chain is Lymphocyte antigen 6L from Homo sapiens (Human).